Consider the following 208-residue polypeptide: Probable acyl-homoserine-lactone synthase (208 aa).

This sequence belongs to the autoinducer synthase family.

The catalysed reaction is a fatty acyl-[ACP] + S-adenosyl-L-methionine = an N-acyl-L-homoserine lactone + S-methyl-5'-thioadenosine + holo-[ACP] + H(+). Functionally, required for the synthesis of OHHL (N-(3-oxooctanoyl)-L-homoserine lactone), an autoinducer molecule which binds to TraR and thus acts in the control of conjugal transfer. This Sinorhizobium fredii (strain NBRC 101917 / NGR234) protein is Probable acyl-homoserine-lactone synthase (traI).